We begin with the raw amino-acid sequence, 734 residues long: Transcription factor EMB1444 (734 aa).

The interval 537-566 (QFPTSLEIPKKNKKRAKPGESSRPRPRDRQ) is disordered. Residues 548-555 (NKKRAKPG) carry the Nuclear localization signal motif. Residues 552 to 601 (AKPGESSRPRPRDRQLIQDRIKELRELVPNGSKCSIDSLLECTIKHMLFL) form the bHLH domain. Basic and acidic residues predominate over residues 553 to 566 (KPGESSRPRPRDRQ).

It belongs to the bHLH protein family. LHW subfamily. Homodimer.

It localises to the nucleus. Functionally, transcription factor that may regulate root development. In Arabidopsis thaliana (Mouse-ear cress), this protein is Transcription factor EMB1444.